Consider the following 278-residue polypeptide: 2-dehydro-3-deoxyphosphooctonate aldolase (278 aa).

It belongs to the KdsA family.

The protein resides in the cytoplasm. It catalyses the reaction D-arabinose 5-phosphate + phosphoenolpyruvate + H2O = 3-deoxy-alpha-D-manno-2-octulosonate-8-phosphate + phosphate. It participates in carbohydrate biosynthesis; 3-deoxy-D-manno-octulosonate biosynthesis; 3-deoxy-D-manno-octulosonate from D-ribulose 5-phosphate: step 2/3. It functions in the pathway bacterial outer membrane biogenesis; lipopolysaccharide biosynthesis. In Bartonella quintana (strain Toulouse) (Rochalimaea quintana), this protein is 2-dehydro-3-deoxyphosphooctonate aldolase.